The sequence spans 718 residues: Gephyrin (718 aa).

The segment covering 1–19 has biased composition (polar residues); sequence MSNTLTTERNITNSPTAAQ. The interval 1 to 26 is disordered; the sequence is MSNTLTTERNITNSPTAAQLNEKESG. An MPT Mo-transferase region spans residues 31–176; that stretch reads EWIVGVLTTS…LPGSVKAIRE (146 aa). Low complexity predominate over residues 222–244; that stretch reads NQNNQNNNNNNNNNNNNNNNNNS. Disordered regions lie at residues 222–266 and 344–364; these read NQNN…SSYN and TGENLIPPQPQQPTNSINDDD. Over residues 245-254 the composition is skewed to basic residues; the sequence is HNHHHHHHHS. The MPT adenylyltransferase stretch occupies residues 260-718; it reads KRGSSYNMTP…KAILIGPINN (459 aa).

The protein in the N-terminal section; belongs to the MoaB/Mog family. In the C-terminal section; belongs to the MoeA family. As to quaternary structure, homotrimer, homodimer and homooligomer. The cofactor is Mg(2+).

It localises to the cell membrane. It is found in the cytoplasm. Its subcellular location is the cytosol. The protein localises to the cytoskeleton. The catalysed reaction is molybdopterin + ATP + H(+) = adenylyl-molybdopterin + diphosphate. It carries out the reaction adenylyl-molybdopterin + molybdate = Mo-molybdopterin + AMP + H(+). It participates in cofactor biosynthesis; molybdopterin biosynthesis. Functionally, microtubule-associated protein involved in membrane protein-cytoskeleton interactions. In terms of biological role, also has a catalytic activity and catalyzes two steps in the biosynthesis of the molybdenum cofactor. In the first step, molybdopterin is adenylated. Subsequently, molybdate is inserted into adenylated molybdopterin and AMP is released. In Dictyostelium discoideum (Social amoeba), this protein is Gephyrin (gphn).